Reading from the N-terminus, the 888-residue chain is Endochitinase A1 (888 aa).

Positions 1–22 (MVSSKLSFVATAVAALAPLASA) are cleaved as a signal peptide. Positions 29–338 (SNLAIYWGQG…DHMKDILLHC (310 aa)) constitute a GH18 domain. The active-site Proton donor is Glu-174. Disordered regions lie at residues 338–631 (CDPS…TTTA), 743–799 (PVTE…VSTS), and 813–855 (PLIL…YTQE). A compositionally biased stretch (low complexity) spans 344–617 (VTSSSAIPSS…STDESSTTVG (274 aa)). Asn-622 carries an N-linked (GlcNAc...) asparagine glycan. Over residues 764–775 (EGSNPTQPSGAS) the composition is skewed to polar residues. A glycan (N-linked (GlcNAc...) asparagine) is linked at Asn-780. Residues 835–855 (PSGQNSGSSSHVPIPPSYTQE) are compositionally biased toward polar residues. A lipid anchor (GPI-anchor amidated glycine) is attached at Gly-863. Positions 864–888 (AASRVTGLGHGLVLTVLTLSAFFVL) are cleaved as a propeptide — removed in mature form.

The protein belongs to the glycosyl hydrolase 18 family. Chitinase class III subfamily.

The protein resides in the cell membrane. It localises to the secreted. Its subcellular location is the cell wall. The enzyme catalyses Random endo-hydrolysis of N-acetyl-beta-D-glucosaminide (1-&gt;4)-beta-linkages in chitin and chitodextrins.. With respect to regulation, the cyclic peptide natural product argifin acts as a specific inhibitor. Functionally, GPI-anchored chitinase involved in the degradation of chitin, a component of the cell walls of fungi and exoskeletal elements of some animals (including worms and arthropods). Required to reshape the cell wall at the sites where cell wall remodeling and/or cell wall maturation actively take place such as sites of conidia formation. The sequence is that of Endochitinase A1 (chiA1) from Aspergillus fumigatus (strain ATCC MYA-4609 / CBS 101355 / FGSC A1100 / Af293) (Neosartorya fumigata).